Reading from the N-terminus, the 168-residue chain is Co-chaperone protein HscB homolog (168 aa).

The J domain maps to 5-77 (DYFSLFGLPS…MLRARYLCES (73 aa)).

This sequence belongs to the HscB family. In terms of assembly, interacts with HscA and stimulates its ATPase activity.

Co-chaperone involved in the maturation of iron-sulfur cluster-containing proteins. Seems to help targeting proteins to be folded toward HscA. This chain is Co-chaperone protein HscB homolog, found in Bordetella avium (strain 197N).